We begin with the raw amino-acid sequence, 83 residues long: U-actitoxin-Aeq6a (83 aa).

Residues 1–20 (MIYKAVFVCLVLVLLGDVFC) form the signal peptide. Residues 21 to 36 (SPRNSGGGTLNDNPFE) constitute a propeptide that is removed on maturation. Pro-82 carries the proline amide modification.

Contains 3 disulfide bonds. Expressed by acrorhagi.

The protein resides in the secreted. The protein localises to the nematocyst. Its function is as follows. Toxin. This Actinia equina (Beadlet anemone) protein is U-actitoxin-Aeq6a.